A 722-amino-acid chain; its full sequence is Solute carrier organic anion transporter family member 4C1 (722 aa).

Residues 1–81 (MQGSKGIENP…PGSQLSELEE (81 aa)) are disordered. Residues 1–101 (MQGSKGIENP…QCLQRCNTPQ (101 aa)) are Cytoplasmic-facing. Phosphoserine occurs at positions 15 and 16. Residue threonine 19 is modified to Phosphothreonine. Phosphoserine occurs at positions 24, 26, and 28. A compositionally biased stretch (polar residues) spans 25-46 (ASPSQVEVSAVASRNQNGGSQP). A helical transmembrane segment spans residues 102-122 (GFLLHYCLLALTQGIVVNGLV). The Extracellular portion of the chain corresponds to 123-141 (NISISTIEKRYEMKSSLTG). Residues 142 to 162 (LISSSYDISFCVLSLFVSFFG) traverse the membrane as a helical segment. The Cytoplasmic portion of the chain corresponds to 163–168 (ERGHKP). A helical transmembrane segment spans residues 169–193 (RWLAFASFMIGLGALVFSLPHFFSG). The Extracellular segment spans residues 194–218 (RYELGSIFEDTCLTRNSTRCSSSTS). A helical transmembrane segment spans residues 219 to 249 (LLSNYFYVFVLGQLLLGTGGTPLYTLGTAFI). Topologically, residues 250–269 (DDSVPTHKSSLYIGIGYSMS) are cytoplasmic. A helical transmembrane segment spans residues 270–290 (ILGPAIGYVLGGQLLTMYIDI). At 291–306 (AMGQSSDLTEDDPRWL) the chain is on the extracellular side. Residues 307–331 (GAWWIGFLLAWLFAWSLIMPFSCFP) form a helical membrane-spanning segment. Residues 332 to 376 (KHLPGTAKIQAGKTSQTHQNNSTSFQHTDENFGKSIKDFPTAVKN) are Cytoplasmic-facing. Residues 377–398 (LMRNTVFICLVLSTTSEALITT) form a helical membrane-spanning segment. The Extracellular portion of the chain corresponds to 399–418 (GFATFLPKFIENQFGLTSSF). Residues 419 to 442 (AATLGGAVLIPGAALGQILGGVLV) traverse the membrane as a helical segment. At 443 to 446 (SKFK) the chain is on the cytoplasmic side. Residues 447-470 (MKCKNTMKFALCTSGVALVLSFVF) traverse the membrane as a helical segment. Residues 471-578 (IYAKCENEPF…RTRCSNLPIF (108 aa)) lie on the Extracellular side of the membrane. One can recognise a Kazal-like domain in the interval 494–549 (GNLTAPCNANCNCLRSYYYPLCGSDGIQYFSPCFAGCLNSVSNRKPKVYYNCSCIE). Cystine bridges form between cysteine 500-cysteine 530, cysteine 506-cysteine 526, and cysteine 515-cysteine 547. Residues 579 to 601 (LGIFFITVIFTFMAGTPITVSIL) traverse the membrane as a helical segment. Residues 602-610 (RCVNHRHRS) are Cytoplasmic-facing. A helical transmembrane segment spans residues 611 to 636 (LALGVQFMLLRLLGTIPGPIIFGVII). Residues 637 to 670 (DSTCVLWDVNECGIKGACWIYDNIKMAHMLVAIS) lie on the Extracellular side of the membrane. Residues 671 to 688 (VTCKVITIFFNGLAIVLY) traverse the membrane as a helical segment. At 689–722 (KPPPPGTEVSFQSQNVIVSTISVEEDLDKAENEG) the chain is on the cytoplasmic side.

The protein belongs to the organo anion transporter (TC 2.A.60) family. In terms of tissue distribution, strongly expressed in initial segment of epididymis and seminal vesicles.

The protein localises to the basolateral cell membrane. It carries out the reaction estrone 3-sulfate(out) = estrone 3-sulfate(in). The catalysed reaction is L-thyroxine(out) = L-thyroxine(in). It catalyses the reaction 3,3',5-triiodo-L-thyronine(out) = 3,3',5-triiodo-L-thyronine(in). The enzyme catalyses chenodeoxycholate(out) = chenodeoxycholate(in). It carries out the reaction glycocholate(out) = glycocholate(in). The catalysed reaction is L-homoarginine(in) = L-homoarginine(out). It catalyses the reaction L-arginine(in) = L-arginine(out). The enzyme catalyses N(omega),N(omega)-dimethyl-L-arginine(out) = N(omega),N(omega)-dimethyl-L-arginine(in). In terms of biological role, mediates the transport of organic anions such as steroids (estrone 3-sulfate, chenodeoxycholate, glycocholate) and thyroid hormones (3,3',5-triiodo-L-thyronine (T3), L-thyroxine (T4)), in the kidney. Capable of transporting cAMP and pharmacological substances such as digoxin, ouabain and methotrexate. Transport is independent of sodium, chloride ion, and ATP. Transport activity is stimulated by an acidic extracellular environment due to increased substrate affinity to the transporter. The driving force for this transport activity is currently not known. The role of hydrogencarbonate (HCO3(-), bicarbonate) as the probable counteranion that exchanges for organic anions is still not well defined. Functions as an uptake transporter at the apical membrane, suggesting a role in renal reabsorption. Involved in the renal secretion of the uremic toxin ADMA (N(omega),N(omega)-dimethyl-L-arginine or asymmetrical dimethylarginine), which is associated to cardiovascular events and mortality, and the structurally related amino acids L-arginine and L-homoarginine (a cardioprotective biomarker). Can act bidirectionally, suggesting a dual protective role of this transport protein; exporting L-homoarginine after being synthesized in proximal tubule cells, and mediating uptake of ADMA from the blood into proximal tubule cells where it is degraded by the enzyme dimethylarginine dimethylaminohydrolase 1 (DDAH1). May be involved in sperm maturation by enabling directed movement of organic anions and compounds within or between cells. This ion-transporting process is important to maintain the strict epididymal homeostasis necessary for sperm maturation. May have a role in secretory functions since seminal vesicle epithelial cells are assumed to secrete proteins involved in decapacitation by modifying surface proteins to facilitate the acquisition of the ability to fertilize the egg. This chain is Solute carrier organic anion transporter family member 4C1, found in Mus musculus (Mouse).